The following is a 700-amino-acid chain: Polyribonucleotide nucleotidyltransferase (700 aa).

Positions 485 and 491 each coordinate Mg(2+). In terms of domain architecture, KH spans proline 552–isoleucine 611. The S1 motif domain occupies glycine 621–lysine 689.

Belongs to the polyribonucleotide nucleotidyltransferase family. Component of the RNA degradosome, which is a multiprotein complex involved in RNA processing and mRNA degradation. Requires Mg(2+) as cofactor.

It is found in the cytoplasm. It catalyses the reaction RNA(n+1) + phosphate = RNA(n) + a ribonucleoside 5'-diphosphate. Functionally, involved in mRNA degradation. Catalyzes the phosphorolysis of single-stranded polyribonucleotides processively in the 3'- to 5'-direction. In Shewanella loihica (strain ATCC BAA-1088 / PV-4), this protein is Polyribonucleotide nucleotidyltransferase.